The following is a 1004-amino-acid chain: Centriolar coiled-coil protein of 110 kDa (1004 aa).

A CEP97 binding region spans residues 1-221 (MEEYEEFCEK…SCLAEVTPDP (221 aa)). Positions 51-90 (EKRKKIQEEKQKALDVQSRKQANRKKALLTRVQEILENVQ) form a coiled coil. The interval 64–82 (LDVQSRKQANRKKALLTRV) is calmodulin-binding. The interval 67–82 (QSRKQANRKKALLTRV) is required for interaction with CEP290. 2 disordered regions span residues 147 to 194 (PVNN…SSAS) and 239 to 279 (RELS…APPM). S170 carries the post-translational modification Phosphoserine. A compositionally biased stretch (low complexity) spans 243-252 (SRSLRNSLKR). A compositionally biased stretch (basic and acidic residues) spans 253–276 (SVNETHSDRENDAAKASDCVKEKA). An interaction with CEP76 region spans residues 349-564 (ENKVKSLKGP…QTQTSRQQMD (216 aa)). Phosphoserine occurs at positions 364, 370, and 398. Positions 401-433 (GKEEAVDRTAPAAAETTNESETVPKSPTDLTGV) are disordered. The segment covering 415–433 (ETTNESETVPKSPTDLTGV) has biased composition (polar residues). S550 carries the post-translational modification Phosphoserine. A coiled-coil region spans residues 641 to 699 (QELLKSKMLAFEEMRKRLEEQHAQQLSLLIAEQEREQEQLQKEIEEQEKMLKEKAVTTD). Calmodulin-binding regions lie at residues 773 to 813 (GRAQ…DKLK) and 901 to 916 (VALS…RKKF). Positions 955–1004 (LSRQGTPKTSVKGVVQNRQKPSQSRVPNRAPVSGAYAGKTQRKRPNVATI) are disordered. Over residues 970 to 980 (QNRQKPSQSRV) the composition is skewed to polar residues. Positions 994–1004 (TQRKRPNVATI) are enriched in basic residues.

In terms of assembly, interacts with CALM1, CETN2, CEP76, CEP104, CEP290 and TALPID3. Interacts with CEP97. Seems to associate with discrete CETN2, CEP97 and CEP290-containing complexes. Interacts with NEURL4 and CCNF; these interactions are not mutually exclusive and both lead to CCP110 ubiquitination and proteasome-dependent degradation. Via its interaction with NEURL4, may indirectly interact with HERC2. Interacts with KIF24, leading to its recruitment to centrioles. Interacts with USP20 and USP33. Interacts with MPHOSPH9. Interacts (via N-terminal region) with ENKD1 (via central region); ENKD1 competes with CEP97 for binding to CCP110, destabilizing the interaction between CP110 and CEP97 which promotes the removal of CCP110 and CEP97 from the mother centriole and allows the initiation of ciliogenesis. Phosphorylated by CDKs. Post-translationally, ubiquitinated by the SCF(CCNF) during G2 phase, leading to its degradation by the proteasome and preventing centrosome reduplication. Deubiquitinated by USP33 in S and G2/M phase, leading to stabilize CCP110 during the period which centrioles duplicate and elongate. Ubiquitinated by the EDVP complex, leading to its degradation.

It is found in the cytoplasm. Its subcellular location is the cytoskeleton. The protein localises to the microtubule organizing center. The protein resides in the centrosome. It localises to the centriole. It is found in the cilium basal body. Its function is as follows. Necessary for centrosome duplication at different stages of procentriole formation. Acts as a key negative regulator of ciliogenesis in collaboration with CEP97 by capping the mother centriole thereby preventing cilia formation. Also involved in promoting ciliogenesis. May play a role in the assembly of the mother centriole subdistal appendages (SDA) thereby effecting the fusion of recycling endosomes to basal bodies during cilia formation. Required for correct spindle formation and has a role in regulating cytokinesis and genome stability via cooperation with CALM1 and CETN2. This chain is Centriolar coiled-coil protein of 110 kDa (Ccp110), found in Mus musculus (Mouse).